The following is an 827-amino-acid chain: Periplasmic nitrate reductase (827 aa).

Positions 1-32 (MELNRRDFMKANAAAAAALAAGITLPVKNVYA) form a signal peptide, tat-type signal. The 4Fe-4S Mo/W bis-MGD-type domain maps to 37-93 (IKWDKAPCRFCGTGCSVLVGTQNGRMVASQGDPDAEVNRGLNCIKGYFLPKIIYGKD). 4 residues coordinate [4Fe-4S] cluster: Cys-44, Cys-47, Cys-51, and Cys-79. Residues Lys-81, Gln-148, Asn-173, Cys-177, 210–217 (WGSNMAEM), 241–245 (STFEH), Met-371, Gln-375, Asn-481, 507–508 (SD), Lys-530, Asp-557, and 717–726 (TGRVLEHWHS) each bind Mo-bis(molybdopterin guanine dinucleotide). Position 793 (Phe-793) interacts with substrate. Positions 801 and 818 each coordinate Mo-bis(molybdopterin guanine dinucleotide).

The protein belongs to the prokaryotic molybdopterin-containing oxidoreductase family. NasA/NapA/NarB subfamily. In terms of assembly, component of the periplasmic nitrate reductase NapAB complex composed of NapA and NapB. The cofactor is [4Fe-4S] cluster. Requires Mo-bis(molybdopterin guanine dinucleotide) as cofactor. Predicted to be exported by the Tat system. The position of the signal peptide cleavage has not been experimentally proven.

The protein localises to the periplasm. The enzyme catalyses 2 Fe(II)-[cytochrome] + nitrate + 2 H(+) = 2 Fe(III)-[cytochrome] + nitrite + H2O. Catalytic subunit of the periplasmic nitrate reductase complex NapAB. Receives electrons from NapB and catalyzes the reduction of nitrate to nitrite. This is Periplasmic nitrate reductase from Glaesserella parasuis serovar 5 (strain SH0165) (Haemophilus parasuis).